The chain runs to 294 residues: 33 kDa chaperonin (294 aa).

Cystine bridges form between Cys236/Cys238 and Cys269/Cys272.

Belongs to the HSP33 family. In terms of processing, under oxidizing conditions two disulfide bonds are formed involving the reactive cysteines. Under reducing conditions zinc is bound to the reactive cysteines and the protein is inactive.

The protein localises to the cytoplasm. Redox regulated molecular chaperone. Protects both thermally unfolding and oxidatively damaged proteins from irreversible aggregation. Plays an important role in the bacterial defense system toward oxidative stress. The protein is 33 kDa chaperonin of Desulforamulus reducens (strain ATCC BAA-1160 / DSM 100696 / MI-1) (Desulfotomaculum reducens).